The following is a 446-amino-acid chain: NAD(P)H sulfur oxidoreductase (CoA-dependent) (446 aa).

17-18 (AA) is an FAD binding site. CoA is bound at residue Arg28. Residues 39-40 (EA) and 46-48 (HAP) each bind FAD. CoA is bound by residues 45 to 49 (SHAPC), 66 to 67 (HY), and Arg76. Cys49 (redox-active) is an active-site residue. FAD is bound by residues Val86, Asp284, and Ala302. Asn306 and Lys362 together coordinate CoA. Position 426 (Tyr426) interacts with FAD. Residues Trp434 and Arg442 each coordinate CoA.

The protein belongs to the class-III pyridine nucleotide-disulfide oxidoreductase family. It depends on FAD as a cofactor.

It catalyses the reaction hydrogen sulfide + NADP(+) = sulfur + NADPH. The enzyme catalyses hydrogen sulfide + NAD(+) = sulfur + NADH. In terms of biological role, catalyzes the CoA-dependent reduction of elemental sulfur (S(0)) to produce hydrogen sulfide. The sequence is that of NAD(P)H sulfur oxidoreductase (CoA-dependent) from Pyrococcus abyssi (strain GE5 / Orsay).